The chain runs to 336 residues: Homoserine dehydrogenase (336 aa).

F8 lines the NADPH pocket. NAD(+)-binding residues include A10, I11, and T94. Positions 11, 94, and 123 each coordinate NADPH. Positions 11, 94, and 123 each coordinate NADP(+). Residues E147, V150, and G152 each contribute to the Na(+) site. NADP(+) contacts are provided by G205 and E208. 2 residues coordinate L-homoserine: E208 and D219. The active-site Proton donor is the K223. G315 is a binding site for NADPH. G315 provides a ligand contact to NAD(+). Position 315 (G315) interacts with NADP(+).

This sequence belongs to the homoserine dehydrogenase family. Requires a metal cation as cofactor.

The enzyme catalyses L-homoserine + NADP(+) = L-aspartate 4-semialdehyde + NADPH + H(+). It catalyses the reaction L-homoserine + NAD(+) = L-aspartate 4-semialdehyde + NADH + H(+). The protein operates within amino-acid biosynthesis; L-methionine biosynthesis via de novo pathway; L-homoserine from L-aspartate: step 3/3. It functions in the pathway amino-acid biosynthesis; L-threonine biosynthesis; L-threonine from L-aspartate: step 3/5. In terms of biological role, catalyzes the conversion of L-aspartate-beta-semialdehyde (L-Asa) to L-homoserine (L-Hse), the third step in the biosynthesis of threonine and methionine from aspartate. This Methanocaldococcus jannaschii (strain ATCC 43067 / DSM 2661 / JAL-1 / JCM 10045 / NBRC 100440) (Methanococcus jannaschii) protein is Homoserine dehydrogenase (hom).